The sequence spans 319 residues: Vomeronasal type-1 receptor 51 (319 aa).

Residues 1–31 lie on the Extracellular side of the membrane; it reads MNEILFFSPQPLFSHMMNENSRVHTHSNLRH. The helical transmembrane segment at 32-52 threads the bilayer; that stretch reads IFFSEIGIGISGNSFLLLFHI. Residues 53 to 65 are Cytoplasmic-facing; the sequence is LKFIHGHRSRLSD. The chain crosses the membrane as a helical span at residues 66 to 86; that stretch reads LPIGLLSLIHLLMLLVMAFIA. The Extracellular portion of the chain corresponds to 87 to 109; sequence TDIFISWRGWDDIICKFLVYLYR. C101 and C188 are joined by a disulfide. A helical transmembrane segment spans residues 110-130; it reads VLRGLSLCTTSMLSVLQAIIL. At 131–150 the chain is on the cytoplasmic side; it reads SPRSSCLAKFKRKSLHHISC. A helical transmembrane segment spans residues 151–171; it reads AILFLSVLYMLIGSQLLVSII. The Extracellular segment spans residues 172–203; the sequence is ATPNLTTNDFIYVTQSCSILPLSYVMQSMFST. An N-linked (GlcNAc...) asparagine glycan is attached at N175. Residues 204 to 224 traverse the membrane as a helical segment; sequence LLVIRDVFLISLMVLSTWYMV. Residues 225–254 lie on the Cytoplasmic side of the membrane; sequence ALLCRHRKKTQHLQGISLSPKTSPKQRATQ. A helical transmembrane segment spans residues 255 to 275; that stretch reads TLLMLMSFFVLMTIYDTIVSC. Residues 276-285 are Extracellular-facing; that stretch reads SRTMFLNDPT. A helical membrane pass occupies residues 286–306; that stretch reads SYNMQIFVVHIYATVSPFVFM. At 307-319 the chain is on the cytoplasmic side; sequence STEKHIVNCLRSV.

Belongs to the G-protein coupled receptor 1 family. As to expression, expressed in a subset of sensory neurons located in the apical layer of the vomeronasal organ.

It localises to the cell membrane. In terms of biological role, putative pheromone receptor implicated in the regulation of social as well as reproductive behavior. In Mus musculus (Mouse), this protein is Vomeronasal type-1 receptor 51 (Vmn1r51).